We begin with the raw amino-acid sequence, 150 residues long: MIP18 family protein FAM96A (150 aa).

The protein belongs to the MIP18 family.

Its function is as follows. May play a role in chromosome segregation through establishment of sister chromatid cohesion. The chain is MIP18 family protein FAM96A (fam96A) from Dictyostelium discoideum (Social amoeba).